The sequence spans 410 residues: Lysosome-associated membrane glycoprotein 2 (410 aa).

The signal sequence occupies residues 1–28; the sequence is MMCFRLSPVSGSGLVLSCLLLGAVQSYA. A first lumenal domain region spans residues 29-192; the sequence is FELNLPDSKA…SKEEFVCEED (164 aa). Residues 29 to 375 lie on the Lumenal side of the membrane; that stretch reads FELNLPDSKA…QDCSADEDNF (347 aa). Cys40 and Cys79 are joined by a disulfide. N-linked (GlcNAc...) asparagine glycosylation is found at Asn48, Asn58, Asn71, Asn75, Asn99, Asn119, Asn123, Asn179, Asn222, Asn229, Asn242, Asn260, Asn275, Asn300, Asn307, Asn317, and Asn356. An intrachain disulfide couples Cys153 to Cys189. A hinge region spans residues 193-228; the sequence is KSVTTVRPIIHTTVPPPTTTPTPLPPKVGNYSVSNG. Positions 229-375 are second lumenal domain; the sequence is NATCLLATMG…QDCSADEDNF (147 aa). Residues Cys232 and Cys265 are joined by a disulfide bond. A disulfide bridge connects residues Cys331 and Cys368. A helical transmembrane segment spans residues 376–399; that stretch reads LVPIAVGAALAGVLALVLLAYFIG. Residues 400 to 410 lie on the Cytoplasmic side of the membrane; the sequence is LKRHHTGYEQF. The important for binding and subsequent lysosomal degradation of target proteins stretch occupies residues 401-404; the sequence is KRHH.

This sequence belongs to the LAMP family. In terms of assembly, monomer. Forms large homooligomers. Interacts (via its cytoplasmic region) with HSPA8; HSPA8 mediates recruitment of proteins with a KFERQ motif to the surface of the lysosome for chaperone-mediated autophagy. Interacts with HSP90 in the lysosome lumen; this enhances LAMP2 stability. Interacts with MLLT11. Interacts with ABCB9. Interacts with FURIN. Interacts with CT55; this interaction may be important for LAMP2 protein stability. Interacts with TMEM175; inhibiting the proton channel activity of TMEM175. Forms a ternary complex with RAB7A and RUFY4 (via RUN domain); the interaction with RAB7A is mediated by RUFY4 (via RUN and coiled coil domains). Post-translationally, extensively N-glycosylated. Contains a minor proportion of O-linked glycans.

The protein localises to the lysosome membrane. It is found in the endosome membrane. The protein resides in the cell membrane. It localises to the cytoplasmic vesicle. Its subcellular location is the autophagosome membrane. Functionally, lysosomal membrane glycoprotein which plays an important role in lysosome biogenesis, lysosomal pH regulation and autophagy. Acts as an important regulator of lysosomal lumen pH regulation by acting as a direct inhibitor of the proton channel TMEM175, facilitating lysosomal acidification for optimal hydrolase activity. Plays an important role in chaperone-mediated autophagy, a process that mediates lysosomal degradation of proteins in response to various stresses and as part of the normal turnover of proteins with a long biological half-live. Functions by binding target proteins, such as GAPDH, NLRP3 and MLLT11, and targeting them for lysosomal degradation. In the chaperone-mediated autophagy, acts downstream of chaperones, such as HSPA8/HSC70, which recognize and bind substrate proteins and mediate their recruitment to lysosomes, where target proteins bind LAMP2. Plays a role in lysosomal protein degradation in response to starvation. Required for the fusion of autophagosomes with lysosomes during autophagy. Cells that lack LAMP2 express normal levels of VAMP8, but fail to accumulate STX17 on autophagosomes, which is the most likely explanation for the lack of fusion between autophagosomes and lysosomes. Required for normal degradation of the contents of autophagosomes. Required for efficient MHC class II-mediated presentation of exogenous antigens via its function in lysosomal protein degradation; antigenic peptides generated by proteases in the endosomal/lysosomal compartment are captured by nascent MHC II subunits. Is not required for efficient MHC class II-mediated presentation of endogenous antigens. The protein is Lysosome-associated membrane glycoprotein 2 (LAMP2) of Cricetulus griseus (Chinese hamster).